A 562-amino-acid chain; its full sequence is Scaffold protein FimL (562 aa).

In terms of assembly, interacts with PilG and FimV.

The protein localises to the cytoplasm. In terms of biological role, regulates multiple virulence functions including type IV pilus (T4P)-mediated assembly and twitching motility as well as cAMP-dependent virulence gene expression. Regulates intracellular cyclic AMP (cAMP) levels through the activation of adenylate cyclase CyaB. Also functions as a scaffold linking FimV and PilG at the pole, where type IV pilus (T4P), the Chp chemosensory system and the CyaB adenylate cyclase interact. The chain is Scaffold protein FimL (fimL) from Pseudomonas aeruginosa (strain ATCC 15692 / DSM 22644 / CIP 104116 / JCM 14847 / LMG 12228 / 1C / PRS 101 / PAO1).